The sequence spans 492 residues: Spindle assembly abnormal protein 6 (492 aa).

The 53-residue stretch at 46–98 (SGEKELKFEISRSDDFEFLFSETLNNEKYQILARDHDLTVDFDAFPKVIIQHL) folds into the PISA domain. The stretch at 192 to 407 (KSADELASLR…KIAHYRAQRF (216 aa)) forms a coiled coil.

As to quaternary structure, nine homodimers form a cartwheel structure with an internal diameter of 23 nM and radial spokes connecting to the microtubule triplets. Interacts with sas-5.

Its subcellular location is the cytoplasm. It localises to the cytoskeleton. The protein resides in the microtubule organizing center. The protein localises to the centrosome. It is found in the centriole. In terms of biological role, central scaffolding component of the centrioles ensuring their 9-fold symmetry. Required for centrosome biogenesis and duplication. This Caenorhabditis elegans protein is Spindle assembly abnormal protein 6.